The primary structure comprises 333 residues: Fatty acid hydroxylase domain-containing protein 2 (333 aa).

6 consecutive transmembrane segments (helical) span residues 29–49, 77–97, 134–154, 168–188, 215–235, and 237–257; these read FILG…TWHL, ILFF…FNGL, TVLF…YPFL, FHWF…LFYY, VISL…PVIV, and PLVM…ALII. In terms of domain architecture, Fatty acid hydroxylase spans 176–299; sequence AIFTLIEEVL…LGVLDHLHGT (124 aa).

Belongs to the sterol desaturase family. In terms of tissue distribution, down-regulated in primary acute myeloid leukemia (AML) patients.

It localises to the cytoplasm. It is found in the membrane. Promotes megakaryocyte differentiation by enhancing ERK phosphorylation and up-regulating RUNX1 expression. In Homo sapiens (Human), this protein is Fatty acid hydroxylase domain-containing protein 2 (FAXDC2).